A 71-amino-acid chain; its full sequence is uncharacterized protein (71 aa).

Residues 12 to 32 traverse the membrane as a helical segment; the sequence is FLVSIAFFGLAPTIPLLAIAL.

The protein resides in the membrane. This is an uncharacterized protein from Sinorhizobium fredii (strain NBRC 101917 / NGR234).